Reading from the N-terminus, the 396-residue chain is S-adenosylmethionine synthase (396 aa).

Glutamate 12 contacts Mg(2+). Histidine 18 is a binding site for ATP. Glutamate 46 serves as a coordination point for K(+). 2 residues coordinate L-methionine: glutamate 59 and glutamine 102. ATP-binding positions include 170-172 (DGK), 238-241 (SGRF), aspartate 249, 255-256 (RK), alanine 272, lysine 276, and lysine 280. Aspartate 249 contributes to the L-methionine binding site. Lysine 280 contributes to the L-methionine binding site.

Belongs to the AdoMet synthase family. In terms of assembly, homotetramer. It depends on Mn(2+) as a cofactor. Requires Mg(2+) as cofactor. The cofactor is Co(2+). K(+) is required as a cofactor.

The protein localises to the cytoplasm. It catalyses the reaction L-methionine + ATP + H2O = S-adenosyl-L-methionine + phosphate + diphosphate. It functions in the pathway amino-acid biosynthesis; S-adenosyl-L-methionine biosynthesis; S-adenosyl-L-methionine from L-methionine: step 1/1. Functionally, catalyzes the formation of S-adenosylmethionine from methionine and ATP. The reaction comprises two steps that are both catalyzed by the same enzyme: formation of S-adenosylmethionine (AdoMet) and triphosphate, and subsequent hydrolysis of the triphosphate. The sequence is that of S-adenosylmethionine synthase (SAMS) from Triticum aestivum (Wheat).